A 454-amino-acid polypeptide reads, in one-letter code: tRNA modification GTPase MnmE (454 aa).

Residues Arg-23, Glu-80, and Lys-120 each contribute to the (6S)-5-formyl-5,6,7,8-tetrahydrofolate site. Residues 216–377 enclose the TrmE-type G domain; the sequence is TIKIVIAGPP…LKNKILEITT (162 aa). Position 226 (Asn-226) interacts with K(+). GTP is bound by residues 226 to 231, 245 to 251, and 270 to 273; these read NVGKSS, TNIPGTT, and DTAG. A Mg(2+)-binding site is contributed by Ser-230. Thr-245, Ile-247, and Thr-250 together coordinate K(+). Thr-251 provides a ligand contact to Mg(2+). Residue Lys-454 coordinates (6S)-5-formyl-5,6,7,8-tetrahydrofolate.

The protein belongs to the TRAFAC class TrmE-Era-EngA-EngB-Septin-like GTPase superfamily. TrmE GTPase family. Homodimer. Heterotetramer of two MnmE and two MnmG subunits. The cofactor is K(+).

The protein localises to the cytoplasm. Its function is as follows. Exhibits a very high intrinsic GTPase hydrolysis rate. Involved in the addition of a carboxymethylaminomethyl (cmnm) group at the wobble position (U34) of certain tRNAs, forming tRNA-cmnm(5)s(2)U34. The chain is tRNA modification GTPase MnmE from Buchnera aphidicola subsp. Cinara cedri (strain Cc).